Here is a 202-residue protein sequence, read N- to C-terminus: Small ribosomal subunit protein uS4 (202 aa).

The segment at E17–R42 is disordered. In terms of domain architecture, S4 RNA-binding spans M90 to H152.

This sequence belongs to the universal ribosomal protein uS4 family. In terms of assembly, part of the 30S ribosomal subunit. Contacts protein S5. The interaction surface between S4 and S5 is involved in control of translational fidelity.

One of the primary rRNA binding proteins, it binds directly to 16S rRNA where it nucleates assembly of the body of the 30S subunit. Its function is as follows. With S5 and S12 plays an important role in translational accuracy. The protein is Small ribosomal subunit protein uS4 of Acaryochloris marina (strain MBIC 11017).